The primary structure comprises 299 residues: ATP phosphoribosyltransferase (299 aa).

This sequence belongs to the ATP phosphoribosyltransferase family. Long subfamily. Requires Mg(2+) as cofactor.

The protein resides in the cytoplasm. The enzyme catalyses 1-(5-phospho-beta-D-ribosyl)-ATP + diphosphate = 5-phospho-alpha-D-ribose 1-diphosphate + ATP. Its pathway is amino-acid biosynthesis; L-histidine biosynthesis; L-histidine from 5-phospho-alpha-D-ribose 1-diphosphate: step 1/9. Its activity is regulated as follows. Feedback inhibited by histidine. Its function is as follows. Catalyzes the condensation of ATP and 5-phosphoribose 1-diphosphate to form N'-(5'-phosphoribosyl)-ATP (PR-ATP). Has a crucial role in the pathway because the rate of histidine biosynthesis seems to be controlled primarily by regulation of HisG enzymatic activity. The protein is ATP phosphoribosyltransferase of Shewanella loihica (strain ATCC BAA-1088 / PV-4).